We begin with the raw amino-acid sequence, 208 residues long: MSDREQRDGGRSAENNNDRKGRNNGRRNDRRNHQDNERDKYIERVVTINRVAKTVKGGRNMSFTALVVVGDGQGMVGVGYGKAKEVPAAIQKGAEEARKNFFRVPMIAGTITHPVEGRDAAGIVMMKPAAPGTGVIAGGAARPVLECAGVQDILSKSLGSDNALNVVRATVDGLKQLVRPEEVAARRGKSLEEVAPAQMLRKRAGQEA.

Positions 1–21 (MSDREQRDGGRSAENNNDRKG) are enriched in basic and acidic residues. The segment at 1-38 (MSDREQRDGGRSAENNNDRKGRNNGRRNDRRNHQDNER) is disordered. The region spanning 41–104 (YIERVVTINR…EEARKNFFRV (64 aa)) is the S5 DRBM domain.

Belongs to the universal ribosomal protein uS5 family. Part of the 30S ribosomal subunit. Contacts proteins S4 and S8.

With S4 and S12 plays an important role in translational accuracy. Its function is as follows. Located at the back of the 30S subunit body where it stabilizes the conformation of the head with respect to the body. The sequence is that of Small ribosomal subunit protein uS5 from Corynebacterium aurimucosum (strain ATCC 700975 / DSM 44827 / CIP 107346 / CN-1) (Corynebacterium nigricans).